We begin with the raw amino-acid sequence, 455 residues long: Putative O-acetyltransferase SAT14 (455 aa).

The protein belongs to the lysine N-acyltransferase MbtK family.

It participates in mycotoxin biosynthesis. Putative O-acetyltransferase; part of the satratoxin SC2 cluster involved in the biosynthesis of satratoxins, trichothecene mycotoxins that are associated with human food poisonings. Satratoxins are suggested to be made by products of multiple gene clusters (SC1, SC2 and SC3) that encode 21 proteins in all, including polyketide synthases, acetyltransferases, and other enzymes expected to modify the trichothecene skeleton. SC1 encodes 10 proteins, SAT1 to SAT10. The largest are SAT8, which encodes a putative polyketide synthase (PKS) with a conventional non-reducing architecture, and SAT10, a putative protein containing four ankyrin repeats and thus may be involved in protein scaffolding. The putative short-chain reductase SAT3 may assist the PKS in some capacity. SAT6 contains a secretory lipase domain and acts probably as a trichothecene esterase. SAT5 encodes a putative acetyltransferase, and so, with SAT6, may affect endogenous protection from toxicity. The probable transcription factor SAT9 may regulate the expression of the SC1 cluster. SC2 encodes proteins SAT11 to SAT16, the largest of which encodes the putative reducing PKS SAT13. SAT11 is a cytochrome P450 monooxygenase, while SAT14 and SAT16 are probable acetyltransferases. The SC2 cluster may be regulated by the transcription factor SAT15. SC3 is a small cluster that encodes 5 proteins, SAT17 to SAT21. SAT21 is a putative MFS-type transporter which may have a role in exporting secondary metabolites. The four other proteins putatively encoded in SC3 include the taurine hydroxylase-like protein SAT17, the O-methyltransferase SAT18, the acetyltransferase SAT19, and the Cys6-type zinc finger SAT20, the latter being probably involved in regulation of SC3 expression. The protein is Putative O-acetyltransferase SAT14 of Stachybotrys chartarum (strain CBS 109288 / IBT 7711) (Toxic black mold).